The following is a 234-amino-acid chain: 2-amino-5-formylamino-6-ribosylaminopyrimidin-4(3H)-one 5'-monophosphate deformylase (234 aa).

Fe cation-binding residues include glutamate 30, histidine 32, aspartate 41, and histidine 111.

This sequence belongs to the creatininase superfamily. FAPy deformylase family. Homodimer. Fe(2+) is required as a cofactor. Zn(2+) serves as cofactor.

The enzyme catalyses 2-amino-5-formylamino-6-(5-phospho-D-ribosylamino)pyrimidin-4(3H)-one + H2O = 2,5-diamino-6-(1-D-ribosylamino)pyrimidin-4(3H)-one 5'-phosphate + formate + H(+). Its pathway is cofactor biosynthesis; coenzyme F420 biosynthesis. It functions in the pathway cofactor biosynthesis; riboflavin biosynthesis. In terms of biological role, catalyzes the hydrolysis of the formamide of 2-amino-5-formylamino-6-ribosylamino-4(3H)-pyrimidinone 5'-monophosphate (FAPy) to form 2,5-diamino-6-ribosylamino-4(3H)-pyrimidinone 5'-phosphate (APy). This is 2-amino-5-formylamino-6-ribosylaminopyrimidin-4(3H)-one 5'-monophosphate deformylase from Methanothermobacter thermautotrophicus (strain ATCC 29096 / DSM 1053 / JCM 10044 / NBRC 100330 / Delta H) (Methanobacterium thermoautotrophicum).